Consider the following 141-residue polypeptide: MSFFPAQPSDKKAIEEGAAFMPRFDASGLITAVVTDARDGELLMVAHMNEEALRLTLETGIAHYWSRSRGKLWKKGETSGNLQSVVELRTDCDQDALWLKVRVAGDGPTCHTGRRSCFYRQVVAENGDISLAIEGACDHEH.

D91 contacts Mg(2+). C92 provides a ligand contact to Zn(2+). Positions 93 and 95 each coordinate Mg(2+). Positions 110 and 117 each coordinate Zn(2+).

The protein belongs to the PRA-CH family. As to quaternary structure, homodimer. The cofactor is Mg(2+). Zn(2+) serves as cofactor.

It localises to the cytoplasm. It carries out the reaction 1-(5-phospho-beta-D-ribosyl)-5'-AMP + H2O = 1-(5-phospho-beta-D-ribosyl)-5-[(5-phospho-beta-D-ribosylamino)methylideneamino]imidazole-4-carboxamide. Its pathway is amino-acid biosynthesis; L-histidine biosynthesis; L-histidine from 5-phospho-alpha-D-ribose 1-diphosphate: step 3/9. Its function is as follows. Catalyzes the hydrolysis of the adenine ring of phosphoribosyl-AMP. The protein is Phosphoribosyl-AMP cyclohydrolase of Brucella anthropi (strain ATCC 49188 / DSM 6882 / CCUG 24695 / JCM 21032 / LMG 3331 / NBRC 15819 / NCTC 12168 / Alc 37) (Ochrobactrum anthropi).